Here is a 453-residue protein sequence, read N- to C-terminus: uncharacterized protein (453 aa).

Residues Cys-74, Cys-80, Cys-83, and Cys-162 each coordinate [4Fe-4S] cluster. S-adenosyl-L-methionine contacts are provided by Gln-286, Tyr-315, Glu-336, and Asp-384. Cys-411 (nucleophile) is an active-site residue.

Belongs to the class I-like SAM-binding methyltransferase superfamily. RNA M5U methyltransferase family.

This is an uncharacterized protein from Staphylococcus aureus (strain MW2).